The primary structure comprises 644 residues: Exoribonuclease 2 (644 aa).

The RNB domain maps to 189–516 (REDLTALDFV…NHRLLKAVIK (328 aa)). The region spanning 561-643 (DTRFAAEIVD…ETRSIIARPV (83 aa)) is the S1 motif domain.

The protein belongs to the RNR ribonuclease family. RNase II subfamily.

It localises to the cytoplasm. It carries out the reaction Exonucleolytic cleavage in the 3'- to 5'-direction to yield nucleoside 5'-phosphates.. Functionally, involved in mRNA degradation. Hydrolyzes single-stranded polyribonucleotides processively in the 3' to 5' direction. This Escherichia coli O8 (strain IAI1) protein is Exoribonuclease 2.